The sequence spans 347 residues: Quinolinate synthase (347 aa).

Residues H47 and S68 each coordinate iminosuccinate. Residue C113 participates in [4Fe-4S] cluster binding. Residues 139 to 141 (YAN) and S156 contribute to the iminosuccinate site. A [4Fe-4S] cluster-binding site is contributed by C200. Iminosuccinate-binding positions include 226 to 228 (HPE) and T243. C297 contacts [4Fe-4S] cluster.

The protein belongs to the quinolinate synthase family. Type 1 subfamily. [4Fe-4S] cluster serves as cofactor.

The protein localises to the cytoplasm. It carries out the reaction iminosuccinate + dihydroxyacetone phosphate = quinolinate + phosphate + 2 H2O + H(+). It functions in the pathway cofactor biosynthesis; NAD(+) biosynthesis; quinolinate from iminoaspartate: step 1/1. Its function is as follows. Catalyzes the condensation of iminoaspartate with dihydroxyacetone phosphate to form quinolinate. The chain is Quinolinate synthase from Escherichia coli O45:K1 (strain S88 / ExPEC).